Here is a 398-residue protein sequence, read N- to C-terminus: MLRLYVLVMGVSAFTLQPAAHTGAARSCRFRGRHYKREFRLEGEPVALRCPQVPYWLWASVSPRINLTWHKNDSARTVPGEEETRMWAQDGALWLLPALQEDSGTYVCTTRNASYCDKMSIELRVFENTDAFLPFISYPQILTLSTSGVLVCPDLSEFTRDKTDVKIQWYKDSLLLDKDNEKFLSVRGTTHLLVHDVALEDAGYYRCVLTFAHEGQQYNITRSIELRIKKKKEETIPVIISPLKTISASLGSRLTIPCKVFLGTGTPLTTMLWWTANDTHIESAYPGGRVTEGPRQEYSENNENYIEVPLIFDPVTREDLHMDFKCVVHNTLSFQTLRTTVKEASSTFSWGIVLAPLSLAFLVLGGIWMHRRCKHRTGKADGLTVLWPHHQDFQSYPK.

The first 13 residues, 1 to 13, serve as a signal peptide directing secretion; the sequence is MLRLYVLVMGVSA. The Extracellular portion of the chain corresponds to 14-343; it reads FTLQPAAHTG…FQTLRTTVKE (330 aa). Ig-like C2-type domains lie at 18–124, 134–223, and 237–349; these read PAAH…IELR, PFIS…ITRS, and PVII…STFS. Disulfide bonds link Cys-28–Cys-116, Cys-50–Cys-108, and Cys-152–Cys-207. N-linked (GlcNAc...) asparagine glycosylation is found at Asn-66, Asn-72, and Asn-112. N-linked (GlcNAc...) asparagine glycosylation is found at Asn-219 and Asn-277. The cysteines at positions 258 and 326 are disulfide-linked. Positions 329-343 are contains proteolytic cleavage site; sequence HNTLSFQTLRTTVKE. Residues 344 to 369 traverse the membrane as a helical segment; the sequence is ASSTFSWGIVLAPLSLAFLVLGGIWM. Residues 370–398 are Cytoplasmic-facing; it reads HRRCKHRTGKADGLTVLWPHHQDFQSYPK.

This sequence belongs to the interleukin-1 receptor family. As to quaternary structure, associates with IL1RAP to form a non-signaling interleukin-1 receptor complex. A soluble form (sIL1R2) can also be produced by proteolytic cleavage at the cell surface (shedding) involving a metalloproteinase; hovever, several sIL1R2 forms ranging from 45 and 60 kDa are reported.

The protein localises to the secreted. Its subcellular location is the cell membrane. Non-signaling receptor for IL1A, IL1B and IL1RN. Reduces IL1B activities. Serves as a decoy receptor by competitive binding to IL1B and preventing its binding to IL1R1. Also modulates cellular response through non-signaling association with IL1RAP after binding to IL1B. IL1R2 (membrane and secreted forms) preferentially binds IL1B and poorly IL1A and IL1RN. The secreted IL1R2 recruits secreted IL1RAP with high affinity; this complex formation may be the dominant mechanism for neutralization of IL1B by secreted/soluble receptors. This Homo sapiens (Human) protein is Interleukin-1 receptor type 2 (IL1R2).